Consider the following 1915-residue polypeptide: Ankyrin repeat domain-containing protein 36A (1915 aa).

ANK repeat units follow at residues 31–60 (YHLK…DANK), 64–93 (KERT…ELNL), 97–126 (EDRT…NPNI), 130–159 (FGRT…NIEE), 163–192 (CEYQ…NVNA), and 196–225 (LGRS…DVLS). Disordered regions lie at residues 261 to 331 (PINS…DEQK), 470 to 619 (ATGQ…QKQS), 639 to 663 (MGGG…DKTD), 676 to 1203 (LQCG…KATS), and 1285 to 1304 (KDVQ…SEGE). Composition is skewed to polar residues over residues 262–272 (INSNPVSSQKQ) and 297–306 (KSGTVSSQKQ). The span at 505–521 (SLTSSEESSERPPLSTL) shows a compositional bias: low complexity. Composition is skewed to basic and acidic residues over residues 551–562 (PAEKATSDDKDS) and 585–596 (PAEKATSDEKDS). 2 stretches are compositionally biased toward polar residues: residues 597-619 (VSNI…QKQS) and 645-657 (GTVS…ASKA). 7 stretches are compositionally biased toward basic and acidic residues: residues 806 to 815 (RENKDGEKSR), 874 to 883 (RENKDGEKSR), 931 to 951 (SDEK…EISR), 976 to 985 (RENKDGEKSR), 1044 to 1053 (RENKDGEKSR), 1100 to 1121 (TSDE…EKSR), and 1134 to 1152 (ICDK…KDEQ). Over residues 1175 to 1196 (VSNIPTEIKDGQQSGTVSSQKQ) the composition is skewed to polar residues. Coiled-coil stretches lie at residues 1383–1466 (IKLK…TEEQ), 1504–1531 (KEDL…IKNQ), 1573–1614 (LAAL…ARCD), and 1727–1814 (NMLL…KRDD). A disordered region spans residues 1489 to 1508 (KTGGNNSNQVSETDEKEDLL).

The protein belongs to the ANKRD36 family.

The sequence is that of Ankyrin repeat domain-containing protein 36A (ANKRD36) from Homo sapiens (Human).